Here is a 268-residue protein sequence, read N- to C-terminus: Imidazole glycerol phosphate synthase subunit HisF (268 aa).

Active-site residues include Asp-12 and Asp-131.

This sequence belongs to the HisA/HisF family. Heterodimer of HisH and HisF.

Its subcellular location is the cytoplasm. It catalyses the reaction 5-[(5-phospho-1-deoxy-D-ribulos-1-ylimino)methylamino]-1-(5-phospho-beta-D-ribosyl)imidazole-4-carboxamide + L-glutamine = D-erythro-1-(imidazol-4-yl)glycerol 3-phosphate + 5-amino-1-(5-phospho-beta-D-ribosyl)imidazole-4-carboxamide + L-glutamate + H(+). The protein operates within amino-acid biosynthesis; L-histidine biosynthesis; L-histidine from 5-phospho-alpha-D-ribose 1-diphosphate: step 5/9. In terms of biological role, IGPS catalyzes the conversion of PRFAR and glutamine to IGP, AICAR and glutamate. The HisF subunit catalyzes the cyclization activity that produces IGP and AICAR from PRFAR using the ammonia provided by the HisH subunit. This Methanosphaerula palustris (strain ATCC BAA-1556 / DSM 19958 / E1-9c) protein is Imidazole glycerol phosphate synthase subunit HisF.